The chain runs to 593 residues: tRNA (guanine(26)-N(2))-dimethyltransferase 1 (593 aa).

One can recognise a Trm1 methyltransferase domain in the interval 9-465 (TVIKEGEAEV…APMEIIWDIM (457 aa)). Arginine 36 provides a ligand contact to S-adenosyl-L-methionine. Residues 56-118 (AMLSKRARSS…KTAYESARRE (63 aa)) form a disordered region. Basic and acidic residues-rich tracts occupy residues 68–81 (VVEK…KEET) and 88–118 (DNGK…ARRE). Residues arginine 134, aspartate 152, and valine 185 each coordinate S-adenosyl-L-methionine. Zn(2+)-binding residues include cysteine 315, cysteine 318, cysteine 350, and cysteine 353. Positions 546-593 (VNGHLNNNHKEAGDEEEEEEEEEPEEDIIEGEPELKRQKTTEDFASTS) are disordered. Residues 558–577 (GDEEEEEEEEEPEEDIIEGE) show a composition bias toward acidic residues. Over residues 578–587 (PELKRQKTTE) the composition is skewed to basic and acidic residues.

It belongs to the class I-like SAM-binding methyltransferase superfamily. Trm1 family.

The enzyme catalyses guanosine(26) in tRNA + 2 S-adenosyl-L-methionine = N(2)-dimethylguanosine(26) in tRNA + 2 S-adenosyl-L-homocysteine + 2 H(+). Functionally, dimethylates a single guanine residue at position 26 of most tRNAs using S-adenosyl-L-methionine as donor of the methyl groups. The chain is tRNA (guanine(26)-N(2))-dimethyltransferase 1 from Arabidopsis thaliana (Mouse-ear cress).